A 433-amino-acid chain; its full sequence is Acetylcholine receptor-like protein cup-4 (433 aa).

An N-terminal signal peptide occupies residues Met1–Ser24. Residues Asn41 and Asn68 are each glycosylated (N-linked (GlcNAc...) asparagine). Cys178 and Cys192 are disulfide-bonded. Residues Asn237 and Asn249 are each glycosylated (N-linked (GlcNAc...) asparagine). A run of 4 helical transmembrane segments spans residues Glu282 to Ile302, Ser307 to Val327, Ile337 to Leu357, and Pro413 to Leu433.

The protein belongs to the ligand-gated ion channel (TC 1.A.9) family. Acetylcholine receptor (TC 1.A.9.1) subfamily. Expressed in coelomocytes.

The protein resides in the cytoplasmic vesicle membrane. In terms of biological role, thought to regulate endocytosis in coelomocytes through modulation of phospholipase C activity. Possible acetylcholine receptor. This chain is Acetylcholine receptor-like protein cup-4 (cup-4), found in Caenorhabditis elegans.